We begin with the raw amino-acid sequence, 280 residues long: Large ribosomal subunit protein uL2 (280 aa).

Disordered regions lie at residues 27–58 (STPEKSLVRPLHGHGGRNAHGRITTRHKGGGH) and 226–280 (MNPV…KHGR). 2 stretches are compositionally biased toward basic residues: residues 37–58 (LHGHGGRNAHGRITTRHKGGGH) and 268–280 (IVRRRRTGKKHGR).

It belongs to the universal ribosomal protein uL2 family. In terms of assembly, part of the 50S ribosomal subunit. Forms a bridge to the 30S subunit in the 70S ribosome.

Functionally, one of the primary rRNA binding proteins. Required for association of the 30S and 50S subunits to form the 70S ribosome, for tRNA binding and peptide bond formation. It has been suggested to have peptidyltransferase activity; this is somewhat controversial. Makes several contacts with the 16S rRNA in the 70S ribosome. The polypeptide is Large ribosomal subunit protein uL2 (Mycobacterium marinum (strain ATCC BAA-535 / M)).